The following is a 240-amino-acid chain: Endonuclease NBR9 (240 aa).

The segment at 1 to 24 (MKGTGGVVVGTQNPVRDYNHSTDE) is disordered. The 77-residue stretch at 97–173 (IDLHGLYVKE…NSGVLVLELQ (77 aa)) folds into the Smr domain. A disordered region spans residues 181 to 219 (GPAVNAPTNQYNAQPHPQYNNNGGQPQGQAQNYNNSGND). The span at 194-215 (QPHPQYNNNGGQPQGQAQNYNN) shows a compositional bias: low complexity.

Its subcellular location is the cytoplasm. Its function is as follows. Endonuclease involved in nonstop mRNA decay via the formation of mRNA cleavage fragments in the vicinity of stalled ribosomes. The protein is Endonuclease NBR9 of Saccharomyces cerevisiae (strain ATCC 204508 / S288c) (Baker's yeast).